The sequence spans 913 residues: MFPEDEYQLEFFRTEGFVRKVCESCGGSFWTRDASRRTCGDPPCDPYSFIGSPVFREMELDSMREHYLSFFEAHGHTRVQRYPVVARWRDDIYLTIASIADFQPFVTSGQVPPPANPLTISQPCIRLDDLDSVGRSGRHLTTFEMMAHHVFNTKEHEIYWKDRTVELCDELLLGLGVDPESITYKESPWAGGGNAGPSLEVLVGGLELATLVFMNLRLDSSGEYVIKGERYSRMDNYIVDTGYGLERFVWASKGSPTIYDAVFPDIVRELSDLAGVEHDLHDPEYAEIFARNARLAGMIDLGEASLRDLRKRIAESINTTPERLERIMAPMERIYAIADHTRCLAYMLGDGIIPSNVKAGYLARLVIRRTLRMMKDLKLEIPLSEIVEMQISKLDYDDWRERMETISEILSLEEERYAETLEKGSRMVSKIASHYSKKGGRIPLTELVSLYDTHGIPPEIARETAGALGVDVELPDNFYSIVASTHSRAEQREVETRSPPFEKTERLFYYRPFDQEFDATVLGIFEGSVVLDRTLFYPEGGGQPADRGVLVRDGQVFNVNDVQMIDGVVLHRVEQEGLSPGDRVTGRIDMRRRMAHARHHTATHIVNDSAKRVLGRHVWQAGAQKSEDRARLDISHYRRISDEELKAIELEANRRVMEMIPVITEFMPREEAERLFGFQLYQGGVPPGREIRVVRVGSDIEACAGTHVTNTGMIGPIKILRTERVQDGVERIEFAAGEAAVQRIQERDDILAEAASILRVPIEQLPRTVFRFFEEWKDQQKVIEHLKEEIAGIRILTLSSEAVDVNGVSIVARDMGESDGETLLKAATMLSERDITAILGGASGGAAKIVVSVGRSGLERGLNAADIVRAAAKYIGGGGGGKPDLAQGGGPNVGGLRAAIDAGMSAARKALQV.

Zn(2+) is bound by residues histidine 600, histidine 604, cysteine 703, and histidine 707.

The protein belongs to the class-II aminoacyl-tRNA synthetase family. The cofactor is Zn(2+).

Its subcellular location is the cytoplasm. It catalyses the reaction tRNA(Ala) + L-alanine + ATP = L-alanyl-tRNA(Ala) + AMP + diphosphate. In terms of biological role, catalyzes the attachment of alanine to tRNA(Ala) in a two-step reaction: alanine is first activated by ATP to form Ala-AMP and then transferred to the acceptor end of tRNA(Ala). Also edits incorrectly charged Ser-tRNA(Ala) and Gly-tRNA(Ala) via its editing domain. The chain is Alanine--tRNA ligase from Methanothrix thermoacetophila (strain DSM 6194 / JCM 14653 / NBRC 101360 / PT) (Methanosaeta thermophila).